The chain runs to 98 residues: Integration host factor subunit alpha (98 aa).

Residues 49–71 (FGNFDLRDKNQRPGRNPKTGEDI) are disordered.

Belongs to the bacterial histone-like protein family. As to quaternary structure, heterodimer of an alpha and a beta chain.

In terms of biological role, this protein is one of the two subunits of integration host factor, a specific DNA-binding protein that functions in genetic recombination as well as in transcriptional and translational control. This is Integration host factor subunit alpha from Shewanella halifaxensis (strain HAW-EB4).